The sequence spans 247 residues: tRNA uridine(34) hydroxylase (247 aa).

The 95-residue stretch at 124–218 (TKQDVIVIDT…YLEDTQNKNN (95 aa)) folds into the Rhodanese domain. The active-site Cysteine persulfide intermediate is the cysteine 178.

It belongs to the TrhO family.

The catalysed reaction is uridine(34) in tRNA + AH2 + O2 = 5-hydroxyuridine(34) in tRNA + A + H2O. In terms of biological role, catalyzes oxygen-dependent 5-hydroxyuridine (ho5U) modification at position 34 in tRNAs. The protein is tRNA uridine(34) hydroxylase of Rickettsia rickettsii (strain Iowa).